A 294-amino-acid polypeptide reads, in one-letter code: Bifunctional protein FolD (294 aa).

NADP(+) is bound by residues 169–171 (GRG), T196, and V237.

This sequence belongs to the tetrahydrofolate dehydrogenase/cyclohydrolase family. In terms of assembly, homodimer.

The catalysed reaction is (6R)-5,10-methylene-5,6,7,8-tetrahydrofolate + NADP(+) = (6R)-5,10-methenyltetrahydrofolate + NADPH. It catalyses the reaction (6R)-5,10-methenyltetrahydrofolate + H2O = (6R)-10-formyltetrahydrofolate + H(+). It functions in the pathway one-carbon metabolism; tetrahydrofolate interconversion. Catalyzes the oxidation of 5,10-methylenetetrahydrofolate to 5,10-methenyltetrahydrofolate and then the hydrolysis of 5,10-methenyltetrahydrofolate to 10-formyltetrahydrofolate. The chain is Bifunctional protein FolD from Renibacterium salmoninarum (strain ATCC 33209 / DSM 20767 / JCM 11484 / NBRC 15589 / NCIMB 2235).